Consider the following 538-residue polypeptide: Inositol-3-phosphate synthase (538 aa).

Positions 74, 75, 76, 77, 150, 186, 187, 197, 198, 200, 247, 248, 249, 250, 298, 299, 323, 326, 357, 358, 359, 372, 412, 413, 441, and 442 each coordinate NAD(+).

It belongs to the myo-inositol 1-phosphate synthase family. In terms of assembly, homotetramer. It depends on NAD(+) as a cofactor.

It is found in the cytoplasm. The enzyme catalyses D-glucose 6-phosphate = 1D-myo-inositol 3-phosphate. The protein operates within polyol metabolism; myo-inositol biosynthesis; myo-inositol from D-glucose 6-phosphate: step 1/2. Its function is as follows. Key enzyme in myo-inositol biosynthesis pathway that catalyzes the conversion of glucose 6-phosphate to 1-myo-inositol 1-phosphate in a NAD-dependent manner. Rate-limiting enzyme in the synthesis of all inositol-containing compounds. This chain is Inositol-3-phosphate synthase (INO1), found in Candida glabrata (strain ATCC 2001 / BCRC 20586 / JCM 3761 / NBRC 0622 / NRRL Y-65 / CBS 138) (Yeast).